Here is a 226-residue protein sequence, read N- to C-terminus: Calcium-binding protein 1 (226 aa).

A lipid anchor (N-myristoyl glycine) is attached at G2. C4 carries S-palmitoyl cysteine lipidation. EF-hand domains follow at residues 81–116, 135–152, 158–193, and 195–226; these read EEIE…MGYM, GHVD…KLLA, IGVK…LLGH, and VGHR…MMSR. D94, D96, D98, Y100, and D105 together coordinate Ca(2+). 4 residues coordinate Ca(2+): D171, N173, D175, and E177. S179 is modified (phosphoserine). Residues E182, D208, N210, D212, R214, and E219 each contribute to the Ca(2+) site.

Homodimer. Interacts (via C-terminus) with ITPR1, ITPR2 and ITPR3. This binding is calcium dependent and the interaction correlates with calcium concentration. An additional calcium-independent interaction with the N-terminus of ITPR1 results in a decreased InsP(3) binding to the receptor. Interacts with CACNA1A (via C-terminal CDB motif) in the pre- and postsynaptic membranes. Interacts with CACNA1C (via C-terminal C and IQ motifs). Interacts with CACNA1D. The binding to the C motif is calcium independent whereas the binding to IQ requires the presence of calcium and is mutually exclusive with calmodulin binding. Interacts with TRPC5 (via C-terminus). Interacts (via EF-hands 1 and 2) at microtubules with MAP1LC3B. Interacts with MYO1C. Interacts (via EF-hands 1 and 2) with NSMF (via the central NLS-containing motif region), the interaction occurs in a calcium dependent manner after synaptic NMDA receptor stimulation and prevents nuclear import of NSMF. Interacts with SPACA9. In terms of processing, phosphorylated. The phosphorylation regulates the activity.

It localises to the cytoplasm. The protein resides in the cytoskeleton. The protein localises to the perinuclear region. It is found in the cell membrane. Its subcellular location is the golgi apparatus. It localises to the postsynaptic density. In terms of biological role, modulates calcium-dependent activity of inositol 1,4,5-triphosphate receptors (ITPRs). Inhibits agonist-induced intracellular calcium signaling. Enhances inactivation and does not support calcium-dependent facilitation of voltage-dependent P/Q-type calcium channels. Causes calcium-dependent facilitation and inhibits inactivation of L-type calcium channels by binding to the same sites as calmodulin in the C-terminal domain of CACNA1C, but has an opposite effect on channel function. Suppresses the calcium-dependent inactivation of CACNA1D. Inhibits TRPC5 channels. Prevents NMDA receptor-induced cellular degeneration. Required for the normal transfer of light signals through the retina. The protein is Calcium-binding protein 1 (CABP1) of Bos taurus (Bovine).